The following is an 85-amino-acid chain: Small proline-rich protein 2D (85 aa).

A compositionally biased stretch (low complexity) spans 1-11 (MSYQQQQCKQP). The disordered stretch occupies residues 1-20 (MSYQQQQCKQPCQPPPVCPP). A run of 4 repeats spans residues 21–29 (KKCPEPCPP), 30–38 (LKCPEPCPP), 39–47 (PKCPEPCPP), and 48–56 (PKCPEPCPE). The segment at 21-56 (KKCPEPCPPLKCPEPCPPPKCPEPCPPPKCPEPCPE) is 4 X 9 AA approximate tandem repeats. The disordered stretch occupies residues 57–85 (PCPPPSCQQKCPPAQPPPPCQQKCPPKSK).

The protein belongs to the cornifin (SPRR) family. Expressed in uterus.

It localises to the cytoplasm. In terms of biological role, cross-linked envelope protein of keratinocytes. It is a keratinocyte protein that first appears in the cell cytosol, but ultimately becomes cross-linked to membrane proteins by transglutaminase. All that results in the formation of an insoluble envelope beneath the plasma membrane. In Mus musculus (Mouse), this protein is Small proline-rich protein 2D (Sprr2d).